The sequence spans 761 residues: MHEIGEHLTTNTGWDIIKNRYEAAQAITEGSNFMIGNGFMGYRGTFAEDGKDAYAACIVTDTWDKADGKWEELSTVPNALLTLLHVDGEPFIMSEEAASFERTLDLSQGVTSRKVSQRMKNGATITIHEEKFASYRKKHAVLMKYTVESDQDTDAVLDTGIDYDVWSINGDHLQGHHYFSHPTGDGVTAKTVSYEDTVTVVETCSLDADASEEDYQNPDGSGRTFSLSLEAGKPVTLEKAMIIYSSNDVDNPQDEALLEAKHMQSYEEEKAANRLEWDNLWSHYDVTIQNNIIDQVALRFNIYHAIIATPVHKSLPIGARGLSCQAYQGAAFWDQEIYNMPMYLYSNPEIARNILKYRHRTLDGARRKAKRLGYEGAYYAWISGKTGDELCPDFFFKDVLSGRDIRNHFNDWQIHISPDIAYAVKKYHQVTGDDAFIRDYGAEMIFEIARFLASHAVYKPMRGRYEFMRVQGPDEYHENVDNNAFTNHQAMFTLQAADELLQTLDEKTLSAVKEKIGLSDDEISLWRDMLANTYVPKPDKHGIIEQFDGYYDLETIIPAKKVTERLIKEDEYYGYPNGVTVRTQCIKQADVIQLFVLHPHLYDRKTVELNYEFYEPRTLHFSSLSPSSYAIVAAQIDKVEEAYRNFRKSVMIDLLNTNEAVSGGTFIGGIHTAANGASWQMVVNGFGGLSVHGDDIHLSPRLPDAWDGYTFKAIVKGQTLEVDVTKEQITITNKSEDRKPLTLHIFGEKSVLDSERITKSR.

Residue 327 to 328 (YQ) participates in glycerol binding. Substrate is bound at residue 333-334 (WD). E475 (proton donor) is an active-site residue. 587–588 (KQ) serves as a coordination point for substrate.

It belongs to the glycosyl hydrolase 65 family. Homodimer.

The catalysed reaction is 2-O-(alpha-D-glucopyranosyl)glycerol + phosphate = beta-D-glucose 1-phosphate + glycerol. In terms of biological role, catalyzes both the (1) reversible phosphorolysis of 2-O-alpha-D-glucopyranosyl-sn-glycerol (GG) from beta-D-glucose 1-phosphate (betaGlc1P) and glycerol and (2) the hydrolysis of betaGlc1P. the betaGlc1P hydrolysis is a glucosyl-transfer reaction to an acceptor water molecule that produces an anomer-inverted alpha-glucose, not a phosphatase-type reaction. In the absence of glycerol produces alpha-D-glucopyranose and phosphate from beta-D-glucopyranose 1-phosphate. In Bacillus selenitireducens (strain ATCC 700615 / DSM 15326 / MLS10), this protein is 1,2-alpha-glucosylglycerol phosphorylase.